Consider the following 166-residue polypeptide: Polyadenylate-binding protein 2 (166 aa).

Positions 55-132 (QSVYVGNVDY…RPLKVTPKRT (78 aa)) constitute an RRM domain. Residues 129–166 (PKRTNVPGMSRGRGRGRGRGRGRGRGGYRGRARGFAPY) are disordered. Positions 140-160 (GRGRGRGRGRGRGRGGYRGRA) are enriched in basic residues.

The protein resides in the nucleus. The protein is Polyadenylate-binding protein 2 (pab2) of Schizosaccharomyces pombe (strain 972 / ATCC 24843) (Fission yeast).